The chain runs to 808 residues: Phospholipase D alpha 1 (808 aa).

The region spanning 1–125 is the C2 domain; sequence MAQILLHGTL…LEGEEIDKWV (125 aa). Asp186 lines the Ca(2+) pocket. Positions 326–364 constitute a PLD phosphodiesterase 1 domain; the sequence is TMFTHHQKIVVVDSELPSGESEKRRILSFVGGIDLCDGR. Catalysis depends on residues His331, Lys333, and Asp338. His331 is an a 1,2-diacyl-sn-glycero-3-phosphate binding site. Residues His370 and His404 each contribute to the Ca(2+) site. Residues Gln520 and His659 each coordinate a 1,2-diacyl-sn-glycero-3-phosphate. A PLD phosphodiesterase 2 domain is found at 654–681; sequence FMIYVHSKMMIVDDEYIIVGSANINQRS. Active-site residues include His659, Lys661, and Asp666. Glu720 provides a ligand contact to Ca(2+).

This sequence belongs to the phospholipase D family. C2-PLD subfamily. Ca(2+) serves as cofactor.

It catalyses the reaction a 1,2-diacyl-sn-glycero-3-phosphocholine + H2O = a 1,2-diacyl-sn-glycero-3-phosphate + choline + H(+). In terms of biological role, hydrolyzes glycerol-phospholipids at the terminal phosphodiesteric bond. Plays an important role in various cellular processes. This Nicotiana tabacum (Common tobacco) protein is Phospholipase D alpha 1 (PLD1).